We begin with the raw amino-acid sequence, 1122 residues long: Transcription-repair-coupling factor (1122 aa).

Residues 593-758 (DLRNGMLMDR…MTGLKELSII (166 aa)) enclose the Helicase ATP-binding domain. Residue 606 to 613 (GDVGFGKT) participates in ATP binding. Residues 711-714 (DEEQ) carry the DEEQ box motif. A Helicase C-terminal domain is found at 779–933 (IIRDALLREH…GFTIASRDMD (155 aa)).

It in the N-terminal section; belongs to the UvrB family. In the C-terminal section; belongs to the helicase family. RecG subfamily.

It is found in the cytoplasm. Couples transcription and DNA repair by recognizing RNA polymerase (RNAP) stalled at DNA lesions. Mediates ATP-dependent release of RNAP and its truncated transcript from the DNA, and recruitment of nucleotide excision repair machinery to the damaged site. The protein is Transcription-repair-coupling factor of Rickettsia conorii (strain ATCC VR-613 / Malish 7).